The following is a 342-amino-acid chain: Aldo-keto reductase pigE (342 aa).

A signal peptide spans 1–27 (MGSISPKTRFPIVLGAGLIGSPGLFEG). Aspartate 52 is an NADP(+) binding site. Tyrosine 57 serves as the catalytic Proton donor. NADP(+)-binding residues include glutamine 182 and arginine 236. An N-linked (GlcNAc...) asparagine glycan is attached at asparagine 271.

It belongs to the aldo/keto reductase family. Aldo/keto reductase 2 subfamily.

Its pathway is secondary metabolite biosynthesis. Aldo-keto reductase; part of the gene cluster that mediates the biosynthesis of azaphilone pigments (MonAzPs), a complex mixture of compounds with a common azaphilone skeleton very widely used as food colorants. Within the pathway, pigE is involved in the dehydration of the C-11 alcohol followed by the reduction of the C6(7) double bond which increases the electrophilicity of the C-5 ketone of the resulting acyl benzopyran and allows the intramolecular Knoevenagel aldol condensation with the C-20 enol of the side chain to yield the characteristic linear tricyclic carbon skeletons of the yellow pigments. The first step of the pathway is performed by the nrPKS pigA that forms the hexaketide precursor from successive condensations of five malonyl-CoA units, with a simple acetyl-CoA starter unit. The role of esterase pigG is not clear, but it may play at most a supplementary role in the formation of the benzaldehyde produced by the pigA nrPKS. This very reactive benzaldehyde is intercepted by the pigC ketoreductase that to provide the first stable enzyme-free MonAzPs intermediate, 6-(4-hydroxy-2-oxopentyl)-3-methyl-2,4-dioxocyclohexane carbaldehyde, also known as M7PKS-1. The FAD-dependent monooxygenase pigN hydroxylates M7PKS-1 at C-4, which triggers the formation of the pyran ring. PigJ, pigK and pigD are involved in the acetylation of the pyran ring. PigJ and pigK form the two subunits of a dedicated fungal FAS that produces the side chain fatty acyl moiety of MonAzPs and pigD transfers the fatty acyl chain to the C-4 alcohol. PigM and pigO are involved in the elimination of the omega-1 alcohol. PigM acts as an O-acetyltransferase that synthesizes the putative O-11 acetyl intermediate whereas pigO eliminates acetic acid to yield an intermediate with a C10(11) double bond. The dehydration of the C-11 alcohol followed by the reduction of the C6(7) double bond by the NAD(P)H-dependent oxidoreductase pigE increases the electrophilicity of the C-5 ketone of the resulting acyl benzopyran. This in turn sets up the C-5 ketone for an intramolecular Knoevenagel aldol condensation with the C-20 enol of the side chain. This condensation affords the characteristic linear tricyclic carbon skeletons of the yellow pigments that serve as the common precursors for the classical yellow pigments monascin and ankaflavin, orange pigments rubopunctatin and monascorubrin, and red pigments ribropunctamine and monascorubramine. The FAD-dependent oxidoreductase pigF is especially invoved in the biosynthesis of orange and red pigments via desaturation of C6(7). In Monascus ruber (Mold), this protein is Aldo-keto reductase pigE.